Consider the following 510-residue polypeptide: Cytochrome P450 94B1 (510 aa).

A helical transmembrane segment spans residues 3 to 23 (MLNAIILILFPIIGFVLIFSF). Cys-450 contacts heme.

This sequence belongs to the cytochrome P450 family. Requires heme as cofactor.

It localises to the membrane. The catalysed reaction is a jasmonyl-L-amino acid + reduced [NADPH--hemoprotein reductase] + O2 = a 12-hydroxyjasmonyl-L-alpha-amino acid + oxidized [NADPH--hemoprotein reductase] + H2O + H(+). Hydroxylase involved in the oxidation of the plant hormone jasmonoyl-L-isoleucine (JA-Ile), a bioactive phytohormone of the jasmonate-mediated signaling pathway. Converts JA-Ile to 12-hydroxy-JA-Ile. In Arabidopsis thaliana (Mouse-ear cress), this protein is Cytochrome P450 94B1.